Here is a 657-residue protein sequence, read N- to C-terminus: Protein mono-ADP-ribosyltransferase TIPARP (657 aa).

Acidic residues predominate over residues 1–10 (MEVETTEPEP). Residues 1–22 (MEVETTEPEPDCVVQPPSPSDD) form a disordered region. C39 is subject to ADP-ribosylcysteine. Residues 41–48 (KKKQEQKR) carry the Nuclear localization signal motif. Positions 121 to 154 (QLPEAHPSTDAPEQGVPIQDHSFPPETISGTVAD) are disordered. The C3H1-type zinc finger occupies 238–265 (ENGIEICMDFLQGTCIYGRDCLKHHTVL). Positions 333 to 411 (STPPCSNSNS…RRPLFRSCFI (79 aa)) constitute a WWE domain. One can recognise a PARP catalytic domain in the interval 449 to 657 (YPETWVYMHP…YEEVSNTVSI (209 aa)).

The protein belongs to the ARTD/PARP family. In terms of assembly, interacts with AHR. Post-translationally, auto-mono-ADP-ribosylated. Ubiquitously expressed.

The protein resides in the nucleus. It catalyses the reaction L-aspartyl-[protein] + NAD(+) = 4-O-(ADP-D-ribosyl)-L-aspartyl-[protein] + nicotinamide. The catalysed reaction is L-glutamyl-[protein] + NAD(+) = 5-O-(ADP-D-ribosyl)-L-glutamyl-[protein] + nicotinamide. The enzyme catalyses L-cysteinyl-[protein] + NAD(+) = S-(ADP-D-ribosyl)-L-cysteinyl-[protein] + nicotinamide + H(+). In terms of biological role, ADP-ribosyltransferase that mediates mono-ADP-ribosylation of glutamate, aspartate and cysteine residues on target proteins. Acts as a negative regulator of AHR by mediating mono-ADP-ribosylation of AHR, leading to inhibit transcription activator activity of AHR. The chain is Protein mono-ADP-ribosyltransferase TIPARP from Mus musculus (Mouse).